Here is a 138-residue protein sequence, read N- to C-terminus: Large ribosomal subunit protein bL17 (138 aa).

Belongs to the bacterial ribosomal protein bL17 family. As to quaternary structure, part of the 50S ribosomal subunit. Contacts protein L32.

In Halorhodospira halophila (strain DSM 244 / SL1) (Ectothiorhodospira halophila (strain DSM 244 / SL1)), this protein is Large ribosomal subunit protein bL17.